The following is a 414-amino-acid chain: Serine hydroxymethyltransferase (414 aa).

(6S)-5,6,7,8-tetrahydrofolate is bound by residues Leu-117 and 121-123; that span reads GHL. The residue at position 226 (Lys-226) is an N6-(pyridoxal phosphate)lysine.

It belongs to the SHMT family. As to quaternary structure, homodimer. The cofactor is pyridoxal 5'-phosphate.

Its subcellular location is the cytoplasm. The enzyme catalyses (6R)-5,10-methylene-5,6,7,8-tetrahydrofolate + glycine + H2O = (6S)-5,6,7,8-tetrahydrofolate + L-serine. It participates in one-carbon metabolism; tetrahydrofolate interconversion. Its pathway is amino-acid biosynthesis; glycine biosynthesis; glycine from L-serine: step 1/1. Its function is as follows. Catalyzes the reversible interconversion of serine and glycine with tetrahydrofolate (THF) serving as the one-carbon carrier. This reaction serves as the major source of one-carbon groups required for the biosynthesis of purines, thymidylate, methionine, and other important biomolecules. Also exhibits THF-independent aldolase activity toward beta-hydroxyamino acids, producing glycine and aldehydes, via a retro-aldol mechanism. This chain is Serine hydroxymethyltransferase, found in Dictyoglomus turgidum (strain DSM 6724 / Z-1310).